We begin with the raw amino-acid sequence, 1094 residues long: Centrosomal protein of 128 kDa (1094 aa).

Positions 1–29 (MAESSSESDHFRCRDRLSPWAARSTHRGT) are disordered. Over residues 7-17 (ESDHFRCRDRL) the composition is skewed to basic and acidic residues. Ser-31 carries the post-translational modification Phosphoserine. Residues 115-140 (DGGTGSELHHFPPTSPLKDYGDPQGI) form a disordered region. Coiled-coil stretches lie at residues 190-827 (SRSD…QESI) and 879-959 (EELK…IALE). 3 positions are modified to phosphoserine: Ser-249, Ser-291, and Ser-331. The tract at residues 319 to 345 (AEGDRKGLQHQVSQISKQQSNYQDEQG) is disordered. Polar residues predominate over residues 328–342 (HQVSQISKQQSNYQD). Residues 987–999 (DSCSSSERTDGRY) are compositionally biased toward basic and acidic residues. The segment at 987–1018 (DSCSSSERTDGRYSKYRVRRNSLQHHQDDTKY) is disordered. Over residues 1000 to 1009 (SKYRVRRNSL) the composition is skewed to basic residues. Ser-1061 carries the post-translational modification Phosphoserine. Positions 1067–1094 (VAPDSASNKEDATMNGTSSQPKKEEYGS) are disordered.

The protein resides in the cytoplasm. It localises to the cytoskeleton. Its subcellular location is the microtubule organizing center. The protein localises to the centrosome. It is found in the centriole. The protein resides in the spindle pole. This Homo sapiens (Human) protein is Centrosomal protein of 128 kDa (CEP128).